We begin with the raw amino-acid sequence, 148 residues long: Small ribosomal subunit protein eS19G (148 aa).

This sequence belongs to the eukaryotic ribosomal protein eS19 family.

Functionally, elimination of the ALEP-1 gene from all somatic cells in its fully activate state may represent an alternative way to gene regulation. The polypeptide is Small ribosomal subunit protein eS19G (RPS19G) (Ascaris suum (Pig roundworm)).